The primary structure comprises 246 residues: Bis(5'-nucleosyl)-tetraphosphatase PrpE [asymmetrical] (246 aa).

It belongs to the PrpE family. Ni(2+) is required as a cofactor.

The catalysed reaction is P(1),P(4)-bis(5'-guanosyl) tetraphosphate + H2O = GMP + GTP + 2 H(+). Functionally, asymmetrically hydrolyzes Ap4p to yield AMP and ATP. The protein is Bis(5'-nucleosyl)-tetraphosphatase PrpE [asymmetrical] of Bacillus cereus (strain ATCC 14579 / DSM 31 / CCUG 7414 / JCM 2152 / NBRC 15305 / NCIMB 9373 / NCTC 2599 / NRRL B-3711).